A 324-amino-acid polypeptide reads, in one-letter code: Beta-ketoacyl-[acyl-carrier-protein] synthase III (324 aa).

Catalysis depends on residues cysteine 114 and histidine 251. The ACP-binding stretch occupies residues 252–256 (QANLR). Residue asparagine 281 is part of the active site.

The protein belongs to the thiolase-like superfamily. FabH family. In terms of assembly, homodimer.

The protein resides in the cytoplasm. The enzyme catalyses malonyl-[ACP] + acetyl-CoA + H(+) = 3-oxobutanoyl-[ACP] + CO2 + CoA. It functions in the pathway lipid metabolism; fatty acid biosynthesis. In terms of biological role, catalyzes the condensation reaction of fatty acid synthesis by the addition to an acyl acceptor of two carbons from malonyl-ACP. Catalyzes the first condensation reaction which initiates fatty acid synthesis and may therefore play a role in governing the total rate of fatty acid production. Possesses both acetoacetyl-ACP synthase and acetyl transacylase activities. Its substrate specificity determines the biosynthesis of branched-chain and/or straight-chain of fatty acids. The sequence is that of Beta-ketoacyl-[acyl-carrier-protein] synthase III from Dinoroseobacter shibae (strain DSM 16493 / NCIMB 14021 / DFL 12).